Reading from the N-terminus, the 269-residue chain is 15-hydroxyprostaglandin dehydrogenase [NAD(+)] (269 aa).

Residues 12–20 (GAAQGIGKA), 36–37 (DW), 63–65 (CDV), and N91 contribute to the NAD(+) site. 2 residues coordinate substrate: S138 and Q148. The active-site Proton acceptor is Y151. Residues 151 to 155 (YCASK) and 186 to 188 (VDT) contribute to the NAD(+) site.

Belongs to the short-chain dehydrogenases/reductases (SDR) family. As to quaternary structure, homodimer. In terms of tissue distribution, expressed in proximal convoluted tubules of the kidney, where it colocalizes with the prostaglandin transporter SLC22A22 (at protein level). Expressed in lung, intestine, stomach and liver.

The protein resides in the cytoplasm. It catalyses the reaction prostaglandin E2 + NAD(+) = 15-oxoprostaglandin E2 + NADH + H(+). It carries out the reaction (15S)-hydroxy-(5Z,8Z,11Z,13E)-eicosatetraenoate + NAD(+) = 15-oxo-(5Z,8Z,11Z,13E)-eicosatetraenoate + NADH + H(+). The enzyme catalyses (11R)-hydroxy-(5Z,8Z,12E,14Z)-eicosatetraenoate + NAD(+) = 11-oxo-(5Z,8Z,12E,14Z)-eicosatetraenoate + NADH + H(+). The catalysed reaction is lipoxin A4 + NAD(+) = 15-oxo-(5S,6R)-dihydroxy-(7E,9E,11Z,13E)-eicosatetraenoate + NADH + H(+). It catalyses the reaction 15-oxo-(5S,6R)-dihydroxy-(7E,9E,11Z)-eicosatrienoate + NADH + H(+) = (5S,6R,15S)-trihydroxy-(7E,9E,11Z)-eicosatrienoate + NAD(+). It carries out the reaction prostaglandin A1 + NAD(+) = 15-oxo-prostaglandin A1 + NADH + H(+). The enzyme catalyses prostaglandin E1 + NAD(+) = 15-oxoprostaglandin E1 + NADH + H(+). The catalysed reaction is 14-hydroxy-(4Z,7Z,10Z,12E,16Z,19Z)-docosahexaenoate + NAD(+) = 14-oxo-(4Z,7Z,10Z,12E,16Z,19Z)-docosahexaenoate + NADH + H(+). It catalyses the reaction resolvin E1 + NAD(+) = 18-oxo-resolvin E1 + NADH + H(+). It carries out the reaction resolvin D1 + NAD(+) = 8-oxoresolvin D1 + NADH + H(+). The enzyme catalyses resolvin D1 + NAD(+) = 17-oxoresolvin D1 + NADH + H(+). The catalysed reaction is resolvin D2 + NAD(+) = 7-oxoresolvin D2 + NADH + H(+). It catalyses the reaction resolvin D2 + NAD(+) = 16-oxoresolvin D2 + NADH + H(+). Its function is as follows. Catalyzes the NAD-dependent dehydrogenation (oxidation) of a broad array of hydroxylated polyunsaturated fatty acids (mainly eicosanoids and docosanoids, including prostaglandins, lipoxins and resolvins), yielding their corresponding keto (oxo) metabolites. Decreases the levels of the pro-proliferative prostaglandins such as prostaglandin E2 (whose activity is increased in cancer because of an increase in the expression of cyclooxygenase 2) and generates oxo-fatty acid products that can profoundly influence cell function by abrogating pro-inflammatory cytokine expression. Converts resolvins E1, D1 and D2 to their oxo products, which represents a mode of resolvin inactivation. Resolvin E1 plays important roles during the resolution phase of acute inflammation, while resolvins D1 and D2 have a unique role in obesity-induced adipose inflammation. This Mus musculus (Mouse) protein is 15-hydroxyprostaglandin dehydrogenase [NAD(+)] (Hpgd).